Reading from the N-terminus, the 242-residue chain is MSMLCYTLIIAFLIGIWAAPKSEDNVPLGSPATSDLSDTSCAQTHEALKTSRNTDQRHPAPKKAEDQELGSAANIIVDPKLFQKRRFQSPRVLFSTQPPPLSRDEQSVEFLENEDALNRNIRSKRENHPVNDHGEYSVCDSVSVWVNKTTATDIKGKPVTVMVDVNLNNHVYKQYFFETKCKNPNPVPSGCRGIDSRHWNSYCTTTQSFVKALTKEGNQASWRFIRIDTACVCVISRKTGNF.

Residues Met-1–Ala-18 form the signal peptide. A propeptide spanning residues Ala-19–Arg-125 is cleaved from the precursor. The span at Leu-48–Asp-66 shows a compositional bias: basic and acidic residues. The disordered stretch occupies residues Leu-48 to Leu-69. Disulfide bonds link Cys-139–Cys-203, Cys-181–Cys-231, and Cys-191–Cys-233. N-linked (GlcNAc...) asparagine glycosylation occurs at Asn-147.

It belongs to the NGF-beta family. Homodimer; non-covalently linked. As to expression, expressed by the venom gland.

It is found in the secreted. In terms of biological role, nerve growth factor is important for the development and maintenance of the sympathetic and sensory nervous systems. It stimulates division and differentiation of sympathetic and embryonic sensory neurons as well as basal forebrain cholinergic neurons in the brain. Its relevance in the snake venom is not clear. However, it has been shown to inhibit metalloproteinase-dependent proteolysis of platelet glycoprotein Ib alpha, suggesting a metalloproteinase inhibition to prevent metalloprotease autodigestion and/or protection against prey proteases. Binds a lipid between the two protein chains in the homodimer. The lipid-bound form promotes histamine relase from mouse mast cells, contrary to the lipid-free form. This chain is Venom nerve growth factor 3, found in Demansia vestigiata (Lesser black whip snake).